A 247-amino-acid chain; its full sequence is tRNA (guanine-N(1)-)-methyltransferase (247 aa).

Glycine 126 is an S-adenosyl-L-methionine binding site.

This sequence belongs to the RNA methyltransferase TrmD family. Homodimer.

It is found in the cytoplasm. It carries out the reaction guanosine(37) in tRNA + S-adenosyl-L-methionine = N(1)-methylguanosine(37) in tRNA + S-adenosyl-L-homocysteine + H(+). Specifically methylates guanosine-37 in various tRNAs. The protein is tRNA (guanine-N(1)-)-methyltransferase of Jannaschia sp. (strain CCS1).